The following is a 497-amino-acid chain: Cysteine desulfurase, mitochondrial (497 aa).

Residues 1–33 (MLKSTATRSITRLSQVYNVPAATYRACLVSRRF) constitute a mitochondrion transit peptide. Pyridoxal 5'-phosphate is bound by residues 168–169 (AT), N248, Q276, and 296–298 (SSH). An N6-(pyridoxal phosphate)lysine modification is found at K299. Residue T336 participates in pyridoxal 5'-phosphate binding. The active-site Cysteine persulfide intermediate is C421. Residue C421 coordinates [2Fe-2S] cluster.

This sequence belongs to the class-V pyridoxal-phosphate-dependent aminotransferase family. NifS/IscS subfamily. The cofactor is pyridoxal 5'-phosphate.

Its subcellular location is the mitochondrion. The catalysed reaction is (sulfur carrier)-H + L-cysteine = (sulfur carrier)-SH + L-alanine. In terms of biological role, catalyzes the removal of elemental sulfur from cysteine to produce alanine. It supplies the inorganic sulfur for iron-sulfur (Fe-S) clusters. Plays a role in both tRNA-processing and mitochondrial metabolism. Involved in the 2-thio-modification of both 5-carboxymethylaminomethyl-2-thiouridine in mitochondrial tRNAs and 5-methoxycarbonylmethyl-2-thiouridine (mcm5s2U) in cytoplasmic tRNAs. The chain is Cysteine desulfurase, mitochondrial from Saccharomyces cerevisiae (strain ATCC 204508 / S288c) (Baker's yeast).